Here is a 253-residue protein sequence, read N- to C-terminus: MQKLIMGNWKMNGNSTSIKELCSGISQAQYDTSRVAIAVFPSSVYVKEVISQLPEKVGVGLQNITFYDDGAYTGEISARMLEDIGCDYLLIGHSERRSLFAESDEDVFKKLNKIIDTTITPVVCIGESLDDRQSGKLKQVLATQLSLILENLSVEQLAKVVIAYEPVWAIGTGVVASLDQIQETHQFIRSLLAKVDERLAKNIKIVYGGSLKAENAKDILSLPDVDGGLIGGASLKAAEFNEIINQANKICTE.

8–10 (NWK) lines the substrate pocket. The active-site Electrophile is His93. Glu165 (proton acceptor) is an active-site residue. Residues Gly171, Ser210, and 231-232 (GG) contribute to the substrate site.

This sequence belongs to the triosephosphate isomerase family. As to quaternary structure, homodimer.

It localises to the cytoplasm. It carries out the reaction D-glyceraldehyde 3-phosphate = dihydroxyacetone phosphate. It functions in the pathway carbohydrate biosynthesis; gluconeogenesis. It participates in carbohydrate degradation; glycolysis; D-glyceraldehyde 3-phosphate from glycerone phosphate: step 1/1. Functionally, involved in the gluconeogenesis. Catalyzes stereospecifically the conversion of dihydroxyacetone phosphate (DHAP) to D-glyceraldehyde-3-phosphate (G3P). This is Triosephosphate isomerase from Francisella tularensis subsp. novicida (strain U112).